Reading from the N-terminus, the 253-residue chain is Indole-3-glycerol phosphate synthase (253 aa).

Belongs to the TrpC family.

It catalyses the reaction 1-(2-carboxyphenylamino)-1-deoxy-D-ribulose 5-phosphate + H(+) = (1S,2R)-1-C-(indol-3-yl)glycerol 3-phosphate + CO2 + H2O. It participates in amino-acid biosynthesis; L-tryptophan biosynthesis; L-tryptophan from chorismate: step 4/5. This Bacillus cereus (strain G9842) protein is Indole-3-glycerol phosphate synthase.